We begin with the raw amino-acid sequence, 411 residues long: Branched-chain-amino-acid aminotransferase, cytosolic (411 aa).

Residue K247 is modified to N6-(pyridoxal phosphate)lysine.

It belongs to the class-IV pyridoxal-phosphate-dependent aminotransferase family. As to quaternary structure, homodimer. Pyridoxal 5'-phosphate is required as a cofactor. In terms of processing, the N-terminus is blocked. As to expression, brain, low expression in ovary and placenta, but not found in liver, kidney, and skeletal muscle.

The protein localises to the cytoplasm. It carries out the reaction L-leucine + 2-oxoglutarate = 4-methyl-2-oxopentanoate + L-glutamate. The catalysed reaction is L-isoleucine + 2-oxoglutarate = (S)-3-methyl-2-oxopentanoate + L-glutamate. It catalyses the reaction L-valine + 2-oxoglutarate = 3-methyl-2-oxobutanoate + L-glutamate. Catalyzes the first reaction in the catabolism of the essential branched chain amino acids leucine, isoleucine, and valine. This is Branched-chain-amino-acid aminotransferase, cytosolic (Bcat1) from Rattus norvegicus (Rat).